Here is a 181-residue protein sequence, read N- to C-terminus: Inner membrane-spanning protein YciB (181 aa).

5 helical membrane passes run 22–42, 50–70, 80–100, 122–142, and 148–168; these read IYTATGALIIATAIQLVVTYA, MQLITFIMVTVFGGMTIFLHD, IVYCVFAAGLIIAHILGKPVI, WVLFFTVCAIANLYVAFEMPL, and FKVFGLLGLTFLYTLFTGMYV.

This sequence belongs to the YciB family.

It localises to the cell inner membrane. Its function is as follows. Plays a role in cell envelope biogenesis, maintenance of cell envelope integrity and membrane homeostasis. The sequence is that of Inner membrane-spanning protein YciB from Aliivibrio fischeri (strain ATCC 700601 / ES114) (Vibrio fischeri).